The sequence spans 723 residues: Transmembrane channel-like protein 7 (723 aa).

Residues 1–21 (MSESSASALQLGRPSRQPAVH) are disordered. At 1-168 (MSESSASALQ…GIQSYFSFLR (168 aa)) the chain is on the extracellular side. A glycan (N-linked (GlcNAc...) asparagine) is linked at N24. The segment at 51 to 70 (RRRTTVHSRDKQSGTLLKST) is disordered. N84 carries an N-linked (GlcNAc...) asparagine glycan. Position 89 is a phosphoserine (S89). N96 carries N-linked (GlcNAc...) asparagine glycosylation. The chain crosses the membrane as a helical span at residues 169–189 (FLVLLNLVIFLIIFMLVLLPI). Over 190–219 (LLTKYKITNSSFVLIPFKDTDIQCTVYPVS) the chain is Cytoplasmic. Residues 220 to 240 (SSGLIYFYSYIIDLLSGTGFL) traverse the membrane as a helical segment. Topologically, residues 241 to 263 (EETSLFYGHYTIDGVKFQNFTYD) are extracellular. A glycan (N-linked (GlcNAc...) asparagine) is linked at N259. Residues 264–284 (LPLAYLISTIAYLALSLLWIV) form a helical membrane-spanning segment. Residues 285 to 362 (KRSVEGFKIN…EETIRIYSLR (78 aa)) are Cytoplasmic-facing. Residues 363-383 (LFLNCIVLAVLGACFYAIYVA) traverse the membrane as a helical segment. Over 384 to 404 (TVFSQEHMKKEIDKMVFGENL) the chain is Extracellular. Residues 405-425 (LILYLPSIVITLANFITPMIF) traverse the membrane as a helical segment. Over 426-494 (AKIIRYEDYS…PCWETQVGQE (69 aa)) the chain is Cytoplasmic. Residues 495 to 515 (MYKLMIFDFIIILAVTLFVDF) traverse the membrane as a helical segment. At 516–555 (PRKLLVTYCSSWKLIQCWGQQEFAIPDNVLGIVYGQTICW) the chain is on the extracellular side. Residues 556–576 (IGAFFSPLLPAIATLKFIIIF) form a helical membrane-spanning segment. The Cytoplasmic portion of the chain corresponds to 577–601 (YVKEWSLLYTCRPSPRPFRASNSNF). A helical transmembrane segment spans residues 602 to 622 (FFLLVLLIGLCLAIIPLTISI). Residues 623 to 665 (SRIPSSKACGPFTNFNTTWEVIPKTVSTFPSSLQSFIHGVTSE) are Extracellular-facing. The N-linked (GlcNAc...) asparagine glycan is linked to N638. The helical transmembrane segment at 666-686 (AFAVPFFMIICLIMFYFIALA) threads the bilayer. At 687–723 (GAHKRVVIQLREQLSLESRDKRYLIQKLTEAQRDTRN) the chain is on the cytoplasmic side.

Belongs to the TMC family. Interacts with PIEZO2; the interaction inhibits PIEZO2-conducted mechanically activated currents.

The protein resides in the membrane. In terms of biological role, acts as an inhibitory modulator of PIEZO2 mechanosensitive channel in dorsal root ganglion (DRG) neurons through physical interactions or interference with the interaction between Piezo2 and the cytoskeleton. The protein is Transmembrane channel-like protein 7 (TMC7) of Macaca fascicularis (Crab-eating macaque).